A 514-amino-acid chain; its full sequence is Peptide chain release factor 3 (514 aa).

The tr-type G domain maps to 8–268 (KKRRTFAIIS…TFLKFAPEPH (261 aa)). GTP-binding positions include 17–24 (SHPDAGKT), 85–89 (DTPGH), and 139–142 (NKLD).

The protein belongs to the TRAFAC class translation factor GTPase superfamily. Classic translation factor GTPase family. PrfC subfamily.

It localises to the cytoplasm. In terms of biological role, increases the formation of ribosomal termination complexes and stimulates activities of RF-1 and RF-2. It binds guanine nucleotides and has strong preference for UGA stop codons. It may interact directly with the ribosome. The stimulation of RF-1 and RF-2 is significantly reduced by GTP and GDP, but not by GMP. The polypeptide is Peptide chain release factor 3 (Streptococcus pneumoniae serotype 19F (strain G54)).